Here is a 436-residue protein sequence, read N- to C-terminus: Xylose isomerase (436 aa).

Positions 306 and 308 each coordinate Mg(2+).

The protein belongs to the xylose isomerase family. In terms of assembly, homotetramer. Mg(2+) serves as cofactor.

It localises to the cytoplasm. It carries out the reaction alpha-D-xylose = alpha-D-xylulofuranose. The sequence is that of Xylose isomerase from Sinorhizobium fredii (strain NBRC 101917 / NGR234).